A 255-amino-acid chain; its full sequence is Flap endonuclease Xni (255 aa).

Asp-105 lines the Mg(2+) pocket. The 5'-3' exonuclease domain maps to 162 to 254; it reads EHKQFIDYLA…LKQFRLPKAN (93 aa). K(+) is bound by residues Leu-172, Ala-173, Pro-181, Val-183, and Ile-186. The segment at 185 to 190 is interaction with DNA; that stretch reads GIGPKS.

Belongs to the Xni family. Mg(2+) serves as cofactor. The cofactor is K(+).

Functionally, has flap endonuclease activity. During DNA replication, flap endonucleases cleave the 5'-overhanging flap structure that is generated by displacement synthesis when DNA polymerase encounters the 5'-end of a downstream Okazaki fragment. The chain is Flap endonuclease Xni from Shewanella piezotolerans (strain WP3 / JCM 13877).